The chain runs to 590 residues: Glutamine--tRNA ligase (590 aa).

Residues 55–65 carry the 'HIGH' region motif; it reads PEPNGYLHIGH. ATP is bound by residues 56-58 and 62-68; these read EPN and HIGHAKS. 2 residues coordinate L-glutamine: D93 and Y238. ATP-binding positions include T257 and 292–293; that span reads RL. A 'KMSKS' region motif is present at residues 299–303; it reads ITSKR.

Belongs to the class-I aminoacyl-tRNA synthetase family. Monomer.

It localises to the cytoplasm. It catalyses the reaction tRNA(Gln) + L-glutamine + ATP = L-glutaminyl-tRNA(Gln) + AMP + diphosphate. The sequence is that of Glutamine--tRNA ligase from Polynucleobacter asymbioticus (strain DSM 18221 / CIP 109841 / QLW-P1DMWA-1) (Polynucleobacter necessarius subsp. asymbioticus).